The chain runs to 1561 residues: Sterile alpha motif domain-containing protein 9-like (1561 aa).

The SAM domain occupies 14-79; it reads WTKEHVRKWV…RMYNKLISSP (66 aa). The interval 78–157 is disordered; sequence SPESHNQDSR…DNKPKPEQMS (80 aa). Composition is skewed to basic and acidic residues over residues 82–107 and 142–153; these read HNQDSRELNDKKLSTKEQQTKTKNEE and VTKDMEDNKPKP.

As to quaternary structure, interacts with EEA1.

It is found in the early endosome. The protein resides in the mitochondrion. May be involved in endosome fusion. Mediates down-regulation of growth factor signaling via internalization of growth factor receptors. The chain is Sterile alpha motif domain-containing protein 9-like (Samd9l) from Mus musculus (Mouse).